A 200-amino-acid chain; its full sequence is Small ribosomal subunit protein uS4 (200 aa).

A disordered region spans residues 1-43 (MARYTGPRGRRDRRAGVMLSSMRKNPLEKKPYPPGEHGRDRQR). The span at 25–43 (NPLEKKPYPPGEHGRDRQR) shows a compositional bias: basic and acidic residues. Positions 92–158 (LRMDNVVYRM…QPIQEAVEQV (67 aa)) constitute an S4 RNA-binding domain.

Belongs to the universal ribosomal protein uS4 family. In terms of assembly, part of the 30S ribosomal subunit. Contacts protein S5. The interaction surface between S4 and S5 is involved in control of translational fidelity.

One of the primary rRNA binding proteins, it binds directly to 16S rRNA where it nucleates assembly of the body of the 30S subunit. In terms of biological role, with S5 and S12 plays an important role in translational accuracy. The sequence is that of Small ribosomal subunit protein uS4 from Rubrobacter xylanophilus (strain DSM 9941 / JCM 11954 / NBRC 16129 / PRD-1).